A 214-amino-acid chain; its full sequence is Urease accessory protein UreG (214 aa).

23–30 (GPVGSGKT) contributes to the GTP binding site.

This sequence belongs to the SIMIBI class G3E GTPase family. UreG subfamily. In terms of assembly, homodimer. UreD, UreF and UreG form a complex that acts as a GTP-hydrolysis-dependent molecular chaperone, activating the urease apoprotein by helping to assemble the nickel containing metallocenter of UreC. The UreE protein probably delivers the nickel.

The protein resides in the cytoplasm. Its function is as follows. Facilitates the functional incorporation of the urease nickel metallocenter. This process requires GTP hydrolysis, probably effectuated by UreG. The sequence is that of Urease accessory protein UreG from Bordetella bronchiseptica (strain ATCC BAA-588 / NCTC 13252 / RB50) (Alcaligenes bronchisepticus).